Here is a 483-residue protein sequence, read N- to C-terminus: Phloretin 2'-O-glucosyltransferase (483 aa).

The active-site Proton acceptor is the His-15. His-15 contacts an anthocyanidin. Asp-118 serves as the catalytic Charge relay. 8 residues coordinate UDP-alpha-D-glucose: Thr-140, Ala-360, Gln-362, His-377, Trp-380, Asn-381, Ser-382, and Glu-385. Ala-400 is a binding site for an anthocyanidin. Positions 401 and 402 each coordinate UDP-alpha-D-glucose.

It belongs to the UDP-glycosyltransferase family. As to expression, highly expressed in roots and at lower levels in leaves, flowers and fruits.

It carries out the reaction phloretin + UDP-alpha-D-glucose = phlorizin + UDP + H(+). Glycosyltransferase that possesses phloretin 2'-O-glycosyltransferase activity. Converts phloretin to phlorizin (phloretin 2'-O-glucoside), a potent antioxidant. Is specific for phloretin and does not possess glycosyltransferase activity toward caffeic acid, catechin, chlorogenic acid, 2-coumaric acid, 3-coumaric acid, 4-coumaric acid, cyanidin, 3,4-dihydroxyhydrocinnamic acid, epicatechin, 3-hydroxybenzoic acid, naringenin, 3,4-dihydroxybenzoic acid, quercetin and rutin. Can glycosylate phloretin in the presence of UDP-glucose, UDP-xylose and UDP-galactose. This Malus domestica (Apple) protein is Phloretin 2'-O-glucosyltransferase.